We begin with the raw amino-acid sequence, 339 residues long: Fructose-1,6-bisphosphatase class 1 (339 aa).

Mg(2+)-binding residues include Glu92, Asp114, Leu116, and Asp117. Substrate is bound by residues 117 to 120 (DGSS), Asn213, and Lys279. A Mg(2+)-binding site is contributed by Glu285.

The protein belongs to the FBPase class 1 family. As to quaternary structure, homotetramer. The cofactor is Mg(2+).

The protein localises to the cytoplasm. It carries out the reaction beta-D-fructose 1,6-bisphosphate + H2O = beta-D-fructose 6-phosphate + phosphate. The protein operates within carbohydrate biosynthesis; gluconeogenesis. This Acidovorax sp. (strain JS42) protein is Fructose-1,6-bisphosphatase class 1.